Consider the following 82-residue polypeptide: uncharacterized protein (82 aa).

This is an uncharacterized protein from Lactococcus lactis subsp. lactis (Streptococcus lactis).